A 510-amino-acid polypeptide reads, in one-letter code: Probable allantoinase 2 (510 aa).

Residues His97, His99, Lys185, His228, His287, and Asp360 each coordinate Zn(2+). Lys185 bears the N6-carboxylysine mark.

Belongs to the metallo-dependent hydrolases superfamily. Allantoinase family. In terms of assembly, homotetramer. Requires Zn(2+) as cofactor. In terms of processing, carboxylation allows a single lysine to coordinate two zinc ions.

It carries out the reaction (S)-allantoin + H2O = allantoate + H(+). The protein operates within nitrogen metabolism; (S)-allantoin degradation; allantoate from (S)-allantoin: step 1/1. This is Probable allantoinase 2 (allB2) from Dictyostelium discoideum (Social amoeba).